Reading from the N-terminus, the 295-residue chain is Small ribosomal subunit protein uS2 (295 aa).

A disordered region spans residues 273–295 (WAASSAPAAETLADPAADPSVKW). Residues 274 to 295 (AASSAPAAETLADPAADPSVKW) show a composition bias toward low complexity.

Belongs to the universal ribosomal protein uS2 family. In terms of assembly, component of the small ribosomal subunit. Mature ribosomes consist of a small (40S) and a large (60S) subunit. The 40S subunit contains about 33 different proteins and 1 molecule of RNA (18S). The 60S subunit contains about 49 different proteins and 3 molecules of RNA (25S, 5.8S and 5S). Interacts with RPS21.

It localises to the cytoplasm. In terms of biological role, required for the assembly and/or stability of the 40S ribosomal subunit. Required for the processing of the 20S rRNA-precursor to mature 18S rRNA in a late step of the maturation of 40S ribosomal subunits. This chain is Small ribosomal subunit protein uS2, found in Paracoccidioides lutzii (strain ATCC MYA-826 / Pb01) (Paracoccidioides brasiliensis).